Here is a 219-residue protein sequence, read N- to C-terminus: Charged multivesicular body protein 5 (219 aa).

The stretch at 22-153 forms a coiled coil; it reads TNVDGRAESI…EIQEALSRSY (132 aa).

It belongs to the SNF7 family. In terms of assembly, probable peripherally associated component of the endosomal sorting required for transport complex III (ESCRT-III).

The protein resides in the cytoplasm. It localises to the cytosol. It is found in the endosome membrane. In terms of biological role, probable peripherally associated component of the endosomal sorting required for transport complex III (ESCRT-III) which is involved in multivesicular bodies (MVBs) formation and sorting of endosomal cargo proteins into MVBs. MVBs contain intraluminal vesicles (ILVs) that are generated by invagination and scission from the limiting membrane of the endosome and mostly are delivered to lysosomes enabling degradation of membrane proteins, such as stimulated growth factor receptors, lysosomal enzymes and lipids. This Xenopus laevis (African clawed frog) protein is Charged multivesicular body protein 5 (chmp5).